The primary structure comprises 274 residues: Nitrogenase iron protein (274 aa).

An ATP-binding site is contributed by 8 to 15 (GKGGIGKS). A [4Fe-4S] cluster-binding site is contributed by Cys-94. The residue at position 97 (Arg-97) is an ADP-ribosylarginine; by dinitrogenase reductase ADP-ribosyltransferase. Cys-131 is a binding site for [4Fe-4S] cluster.

The protein belongs to the NifH/BchL/ChlL family. In terms of assembly, homodimer. [4Fe-4S] cluster is required as a cofactor. The reversible ADP-ribosylation of Arg-97 inactivates the nitrogenase reductase and regulates nitrogenase activity.

It carries out the reaction N2 + 8 reduced [2Fe-2S]-[ferredoxin] + 16 ATP + 16 H2O = H2 + 8 oxidized [2Fe-2S]-[ferredoxin] + 2 NH4(+) + 16 ADP + 16 phosphate + 6 H(+). In terms of biological role, the key enzymatic reactions in nitrogen fixation are catalyzed by the nitrogenase complex, which has 2 components: the iron protein and the molybdenum-iron protein. The protein is Nitrogenase iron protein of Solidesulfovibrio magneticus (strain ATCC 700980 / DSM 13731 / RS-1) (Desulfovibrio magneticus).